Here is a 609-residue protein sequence, read N- to C-terminus: Glutamine--fructose-6-phosphate aminotransferase [isomerizing] (609 aa).

The Nucleophile; for GATase activity role is filled by Cys-2. The 216-residue stretch at 2–217 (CGIVGAIAGR…DGDTAEIRRD (216 aa)) folds into the Glutamine amidotransferase type-2 domain. SIS domains are found at residues 285 to 425 (AESV…LRGA) and 458 to 599 (WAEC…VDKP). Lys-604 functions as the For Fru-6P isomerization activity in the catalytic mechanism.

In terms of assembly, homodimer.

The protein localises to the cytoplasm. It catalyses the reaction D-fructose 6-phosphate + L-glutamine = D-glucosamine 6-phosphate + L-glutamate. In terms of biological role, catalyzes the first step in hexosamine metabolism, converting fructose-6P into glucosamine-6P using glutamine as a nitrogen source. The chain is Glutamine--fructose-6-phosphate aminotransferase [isomerizing] from Xylella fastidiosa (strain Temecula1 / ATCC 700964).